Consider the following 321-residue polypeptide: Ribose-phosphate pyrophosphokinase (321 aa).

ATP contacts are provided by residues 44–46 and 103–104; these read DGE and RQ. Residues histidine 137 and aspartate 179 each coordinate Mg(2+). Lysine 202 is an active-site residue. Residues arginine 204, aspartate 228, and 232 to 236 each bind D-ribose 5-phosphate; that span reads DTAGT.

It belongs to the ribose-phosphate pyrophosphokinase family. Class I subfamily. In terms of assembly, homohexamer. Mg(2+) is required as a cofactor.

It is found in the cytoplasm. It carries out the reaction D-ribose 5-phosphate + ATP = 5-phospho-alpha-D-ribose 1-diphosphate + AMP + H(+). It participates in metabolic intermediate biosynthesis; 5-phospho-alpha-D-ribose 1-diphosphate biosynthesis; 5-phospho-alpha-D-ribose 1-diphosphate from D-ribose 5-phosphate (route I): step 1/1. In terms of biological role, involved in the biosynthesis of the central metabolite phospho-alpha-D-ribosyl-1-pyrophosphate (PRPP) via the transfer of pyrophosphoryl group from ATP to 1-hydroxyl of ribose-5-phosphate (Rib-5-P). The protein is Ribose-phosphate pyrophosphokinase of Staphylococcus saprophyticus subsp. saprophyticus (strain ATCC 15305 / DSM 20229 / NCIMB 8711 / NCTC 7292 / S-41).